The sequence spans 637 residues: DNA gyrase subunit B (637 aa).

One can recognise a Toprim domain in the interval 422 to 536; it reads CEVYIVEGDS…AGYVYLAMPP (115 aa). 3 residues coordinate Mg(2+): E428, D501, and D503.

Belongs to the type II topoisomerase GyrB family. In terms of assembly, heterotetramer, composed of two GyrA and two GyrB chains. In the heterotetramer, GyrA contains the active site tyrosine that forms a transient covalent intermediate with DNA, while GyrB binds cofactors and catalyzes ATP hydrolysis. Requires Mg(2+) as cofactor. The cofactor is Mn(2+). It depends on Ca(2+) as a cofactor.

It localises to the cytoplasm. The catalysed reaction is ATP-dependent breakage, passage and rejoining of double-stranded DNA.. Its function is as follows. A type II topoisomerase that negatively supercoils closed circular double-stranded (ds) DNA in an ATP-dependent manner to modulate DNA topology and maintain chromosomes in an underwound state. Negative supercoiling favors strand separation, and DNA replication, transcription, recombination and repair, all of which involve strand separation. Also able to catalyze the interconversion of other topological isomers of dsDNA rings, including catenanes and knotted rings. Type II topoisomerases break and join 2 DNA strands simultaneously in an ATP-dependent manner. This chain is DNA gyrase subunit B, found in Treponema pallidum (strain Nichols).